Reading from the N-terminus, the 448-residue chain is Trigger factor (448 aa).

The PPIase FKBP-type domain occupies G172–P257.

Belongs to the FKBP-type PPIase family. Tig subfamily.

It is found in the cytoplasm. The enzyme catalyses [protein]-peptidylproline (omega=180) = [protein]-peptidylproline (omega=0). Functionally, involved in protein export. Acts as a chaperone by maintaining the newly synthesized protein in an open conformation. Functions as a peptidyl-prolyl cis-trans isomerase. The polypeptide is Trigger factor (Burkholderia orbicola (strain MC0-3)).